The following is a 670-amino-acid chain: DNA ligase (670 aa).

NAD(+)-binding positions include 36-40 (DEEYD), 84-85 (SL), and Glu-116. Lys-118 (N6-AMP-lysine intermediate) is an active-site residue. Arg-139, Glu-177, Lys-293, and Lys-317 together coordinate NAD(+). Zn(2+) contacts are provided by Cys-411, Cys-414, Cys-429, and Cys-434. The BRCT domain maps to 594–670 (KKPSPLKGLT…SYEEFLKMLE (77 aa)).

It belongs to the NAD-dependent DNA ligase family. LigA subfamily. Requires Mg(2+) as cofactor. Mn(2+) is required as a cofactor.

It catalyses the reaction NAD(+) + (deoxyribonucleotide)n-3'-hydroxyl + 5'-phospho-(deoxyribonucleotide)m = (deoxyribonucleotide)n+m + AMP + beta-nicotinamide D-nucleotide.. In terms of biological role, DNA ligase that catalyzes the formation of phosphodiester linkages between 5'-phosphoryl and 3'-hydroxyl groups in double-stranded DNA using NAD as a coenzyme and as the energy source for the reaction. It is essential for DNA replication and repair of damaged DNA. This is DNA ligase from Thermodesulfovibrio yellowstonii (strain ATCC 51303 / DSM 11347 / YP87).